The chain runs to 95 residues: LSM complex subunit LSM2 (95 aa).

Positions Leu-2–Met-76 constitute a Sm domain.

This sequence belongs to the snRNP Sm proteins family. As to quaternary structure, component of the heptameric LSM1-LSM7 complex that forms a seven-membered ring structure with a donut shape. The LSm subunits are arranged in the order LSM1, LSM2, LSM3, LSM6, LSM5, LSM7 and LSM4. Except for LSM1, where a C-terminal helix crosses the ring structure to form additional interactions with LSM3 and LSM6, each subunit interacts only with its two neighboring subunits. The LSM1-LSM7 complex interacts with PAT1; within the complex PAT1 has direct interactions with LSM2 and LSM3. The LSM1-LSM7 complex interacts with XRN1. Component of the heptameric LSM2-LSM8 complex that forms a seven-membered ring structure with a donut shape; an RNA strand can pass through the hole in the center of the ring structure. The LSm subunits are arranged in the order LSM8, LSM2, LSM3, LSM6, LSM5, LSM7 and LSM4. Interacts with U6 snRNA SNR6 and chaperone PRP24; to promote formation of the U4/U6-U5 tri-snRNP (small nuclear ribonucleoprotein) complex, the LSM2-LSM8 complex preferentially binds U6 snRNA that has been modified to contain a non-cyclic 3' phosphate. Component of the spliceosome U4/U6-U5 tri-snRNP complex composed of the U4, U6 and U5 snRNAs and at least PRP3, PRP4, PRP6, PRP8, PRP18, PRP31, PRP38, SNU13, SNU23, SNU66, SNU114, SPP381, SMB1, SMD1, SMD2, SMD3, SMX2, SMX3, LSM2, LSM3, LSM4, LSM5, LSM6, LSM7, LSM8, BRR2 and DIB1. May be found in a complex comprising LSM2-LSM7 without LSM1 or LSM8; the complex associates with pre-P RNA and snoRNA SNR5.

The protein resides in the nucleus. It is found in the nucleolus. The protein localises to the cytoplasm. Functionally, component of LSm protein complexes, which are involved in RNA processing and may function in a chaperone-like manner. Component of the cytoplasmic LSM1-LSM7 complex which is involved in mRNA degradation by activating the decapping step. Together with PAT1, the LSM1-LSM7 complex binds to osmotic stress-activated mRNAs to attenuate the osmotic stress response, probably by limiting ribosome access to the mRNA and consequently translation. Component of the nuclear LSM2-LSM8 complex, which is involved in spliceosome assembly. The LSM2-LSM8 complex plays a role in the biogenesis of the spliceosomal U4/U6-U5 tri-snRNP complex by accelerating PRP24-mediated annealing of U4/U6 di-snRNA. The LSM2-LSM8 complex binds U6 snRNA terminating with a non-cyclic 3' phosphate group. LSM2-LSM8 is probably also involved in degradation of nuclear pre-mRNA by targeting them for decapping. LSM2-LSM8 could be involved in processing of pre-tRNAs, pre-rRNAs and U3 snoRNA, although involvement may be indirect. In a complex that probably contains LSM2-LSM7, but not LSM1 or LSM8, associates with the precursor of the RNA component of RNase P (pre-P RNA) and may be involved in maturing pre-P RNA; the complex also associates with snoRNA SNR5. The polypeptide is LSM complex subunit LSM2 (LSM2) (Saccharomyces cerevisiae (strain ATCC 204508 / S288c) (Baker's yeast)).